The primary structure comprises 490 residues: Tryptophan 5-hydroxylase 2 (490 aa).

The residue at position 19 (Ser-19) is a Phosphoserine. A disordered region spans residues 34 to 62 (LTLNKANSGKNDDKGNKGSSKNETATESG). Residues 50–62 (KGSSKNETATESG) are compositionally biased toward polar residues. Positions 65-140 (AVVFSLKNEV…TIVTLNPPEN (76 aa)) constitute an ACT domain. Residues His-318, His-323, and Glu-363 each contribute to the Fe cation site.

The protein belongs to the biopterin-dependent aromatic amino acid hydroxylase family. Interacts with DNAJC12. Requires Fe(2+) as cofactor.

The enzyme catalyses (6R)-L-erythro-5,6,7,8-tetrahydrobiopterin + L-tryptophan + O2 = 5-hydroxy-L-tryptophan + (4aS,6R)-4a-hydroxy-L-erythro-5,6,7,8-tetrahydrobiopterin. It functions in the pathway aromatic compound metabolism; serotonin biosynthesis; serotonin from L-tryptophan: step 1/2. This chain is Tryptophan 5-hydroxylase 2 (TPH2), found in Macaca mulatta (Rhesus macaque).